The chain runs to 274 residues: Orotidine 5'-phosphate decarboxylase (274 aa).

The active-site Proton donor is K96.

The protein belongs to the OMP decarboxylase family. Type 2 subfamily.

It catalyses the reaction orotidine 5'-phosphate + H(+) = UMP + CO2. It functions in the pathway pyrimidine metabolism; UMP biosynthesis via de novo pathway; UMP from orotate: step 2/2. The polypeptide is Orotidine 5'-phosphate decarboxylase (Bacteroides fragilis (strain ATCC 25285 / DSM 2151 / CCUG 4856 / JCM 11019 / LMG 10263 / NCTC 9343 / Onslow / VPI 2553 / EN-2)).